The following is a 1453-amino-acid chain: MCPEEGGAAGLGELRSWWEVPAIAHFCSLFRTAFRLPDFEIEELEAALHRDDVEFISDLIACLLQGCYQRRDITPQTFHSYLEDIINYRWELEEGKPNPLREASFQDLPLRTRVEILHRLCDYRLDADDVFDLLKGLDADSLRVEPLGEDNSGALYWYFYGTRMYKEDPVQGRSNGELSLCRESERQKNVSNVPGKTGKRRGRPPKRKKLQEEIISSEKQEENSLTSDLQTRNGSRGPGQGTWWLLCQTEEEWRQVTESFRERTSLRERQLYKLLSEDFLPEICNMIAQKGKRPQRTKPELQHRFMSDHLSIKSIKLEETPMLTKIEKQKRREEEEERQLLLAVQKKEQEQMLKEERKREMEEKVKAVEDRAKRRKLREERAWLLAQGKELPPELSHLDLNSPMREGKKTKDLFELDDDFTAMYKVLDVVKAHKDSWPFLEPVDESYAPNYYQIIKIPMDISSMEKKLNGGLYCNKEEFVNDMKTMFRNCRKYNGDSSEYTKMSDNLERCFHRAMTKHFPGEDGDTDEEFWIKEDEKREKRRSRSGRSSGSHVWTRSRDTEGSSRKQPPVENGGKSLPPARRAASSGDDQSRSSIQLPPEVGTSHGQGFSRPLHCGRVPSHAPPLNQMRPAAPGTFGSLQGSDPTNLHGSSRIPEAPPGEPLQHPPFAIQAPVGISNHRGSLLSAPDLSNMGSHVPSLQLGQMNCPSQDGNMYPPAPFQAGFIPSRHGGTPARPPDFPESSEIPPGHIYHSYKYLNRAHPAVWNGNHGTTNPGRLGPDEKPHLGPGPSHHPHTLGHMMDGRVMRQPIPPNQWTKQSSFLPHGVPSSGYMQPPCKSAGHRLQPPPTPAPSPRFRGPSQALRGAQGGESMMDSPEMIAMQQLSSRVCPPGVPYHPRQPTPPQLPGPFPQVAHSASVCVSAPKPALDNPGSTQEMTETHEPEEDPAEPLPGHEEKAASICSSEGVYLKQLPHPAPPLQASCTRQSSPQERETEDSQLKSDASDSADTYKTSKNKNTWPLDNSYSSPAVQGCLRDLSIVAETGNLPENGVVGEASPCRSEGKGLDGSGSEKPLCPRGKTLQEAVPCTGPNATTPPCTDPSLMAATVNQFSPLYMPGIEYSNSATQYPMSPSLQGLASMMGGKSSGSQPQSFPPRGFQANGPHPGLFPRYRPQQGMRYSYQPPSQPSYHPYQRTPYYTCPQGFSDWQRSLPSQRSPSGPPGSHPPRSLFSEKNVLSSLQGCETLNTALTSPTQMDVVTAKVVPPDGHNSGPEEEKMDESVERPESPKEFLDLDNHNAATKRQNSLSTSDYLYGTPPPSLSSGMTFGSSAFPPHSVMLQTGSPYTPQRSASHFQPRAYPSPVPAHPPPHPVATQPNGLSPEDSLYCCQEEGLGHFQASMMEQTGTGSGLRGSFQEVHRPPGLQMHPVQSQSLFPKTPAPAASPEQLPPHKTPTLPLDQS.

The disordered stretch occupies residues 170-237 (VQGRSNGELS…DLQTRNGSRG (68 aa)). The span at 197–209 (TGKRRGRPPKRKK) shows a compositional bias: basic residues. A compositionally biased stretch (basic and acidic residues) spans 210–222 (LQEEIISSEKQEE). The segment covering 223 to 234 (NSLTSDLQTRNG) has biased composition (polar residues). Serine 402 carries the post-translational modification Phosphoserine. The 105-residue stretch at 414 to 518 (FELDDDFTAM…RCFHRAMTKH (105 aa)) folds into the Bromo domain. Threonine 526 bears the Phosphothreonine mark. Disordered regions lie at residues 536-667 (EKRE…HPPF), 767-796 (HGTT…TLGH), 827-868 (GYMQ…GESM), 884-1020 (VCPP…DNSY), 1046-1072 (VVGE…LCPR), 1131-1308 (LASM…YLYG), 1331-1368 (MLQT…VATQ), and 1396-1453 (QTGT…LDQS). Serine 551 carries the phosphoserine modification. Positions 637–649 (GSLQGSDPTNLHG) are enriched in polar residues. The span at 655–664 (EAPPGEPLQH) shows a compositional bias: pro residues. Over residues 887-905 (PGVPYHPRQPTPPQLPGPF) the composition is skewed to pro residues. Serine 983 is modified (phosphoserine). Residues 985-998 (QERETEDSQLKSDA) are compositionally biased toward basic and acidic residues. The segment covering 999–1020 (SDSADTYKTSKNKNTWPLDNSY) has biased composition (polar residues). Asymmetric dimethylarginine is present on residues arginine 1166 and arginine 1172. Low complexity-rich tracts occupy residues 1173–1187 (YSYQ…HPYQ) and 1202–1211 (QRSLPSQRSP). A compositionally biased stretch (polar residues) spans 1228 to 1250 (NVLSSLQGCETLNTALTSPTQMD). The span at 1265–1289 (GPEEEKMDESVERPESPKEFLDLDN) shows a compositional bias: basic and acidic residues. Residue serine 1280 is modified to Phosphoserine. Composition is skewed to polar residues over residues 1291–1304 (NAAT…STSD) and 1331–1346 (MLQT…SASH). Residues 1352–1364 (YPSPVPAHPPPHP) show a composition bias toward pro residues.

As to quaternary structure, component of the CERF-1 ISWI chromatin remodeling complex (also called the CECR2-containing remodeling factor (CERF) complex) at least composed of CECR2 and SMARCA1. Component of the CERF-5 ISWI chromatin remodeling complex at least composed of CECR2 and SMARCA5/SNF2H. LUZP1 is detected as part of the CERF-1 and CERF-5 complexes in embryonic stem (ES) cells where it is involved in complex stabilization but is not detected in the complexes in the testis. Interacts with CCAR2; CCAR2 may form part of the CERF-1 and/or CEF-5 ISWI chromatin remodeling complexes in ES cells. Interacts with acetylated lysine residues on histone H2A and H3 (in vitro). Interacts with LRPPRC.

It is found in the nucleus. In terms of biological role, regulatory subunit of the ATP-dependent CERF-1 and CERF-5 ISWI chromatin remodeling complexes, which form ordered nucleosome arrays on chromatin and facilitate access to DNA during DNA-templated processes such as DNA replication, transcription, and repair. The complexes do not have the ability to slide mononucleosomes to the center of a DNA template. The CERF-1 ISWI chromatin remodeling complex has a lower ATP hydrolysis rate than the CERF-5 ISWI chromatin remodeling complex. Plays a role in various processes during development: required during embryogenesis for neural tube closure and inner ear development. In adults, required for spermatogenesis, via the formation of ISWI-type chromatin complexes. In histone-modifying complexes, CECR2 recognizes and binds acylated histones: binds histones that are acetylated and/or butyrylated. May also be involved through its interaction with LRPPRC in the integration of cytoskeletal network with vesicular trafficking, nucleocytosolic shuttling, transcription, chromosome remodeling and cytokinesis. This chain is Chromatin remodeling regulator CECR2, found in Mus musculus (Mouse).